Consider the following 101-residue polypeptide: Cell cycle protein GpsB (101 aa).

Positions 34 to 71 (LDMVIKDYETFNQEIEKLQQENLHLSKQLEEAVEQGKR) form a coiled coil.

Belongs to the GpsB family. In terms of assembly, forms polymers through the coiled coil domains. Interacts with PBP1, MreC and EzrA.

The protein resides in the cytoplasm. Divisome component that associates with the complex late in its assembly, after the Z-ring is formed, and is dependent on DivIC and PBP2B for its recruitment to the divisome. Together with EzrA, is a key component of the system that regulates PBP1 localization during cell cycle progression. Its main role could be the removal of PBP1 from the cell pole after pole maturation is completed. Also contributes to the recruitment of PBP1 to the division complex. Not essential for septum formation. This Bacillus pumilus (strain SAFR-032) protein is Cell cycle protein GpsB.